The chain runs to 148 residues: FAD synthase (148 aa).

Residues 11–12 (TF), 16–19 (HPGH), Asn94, and Tyr121 each bind ATP.

It belongs to the archaeal FAD synthase family. In terms of assembly, homodimer. The cofactor is a divalent metal cation.

The catalysed reaction is FMN + ATP + H(+) = FAD + diphosphate. Its pathway is cofactor biosynthesis; FAD biosynthesis; FAD from FMN: step 1/1. Catalyzes the transfer of the AMP portion of ATP to flavin mononucleotide (FMN) to produce flavin adenine dinucleotide (FAD) coenzyme. The sequence is that of FAD synthase from Methanoregula boonei (strain DSM 21154 / JCM 14090 / 6A8).